We begin with the raw amino-acid sequence, 95 residues long: Ragulator complex protein LAMTOR4 homolog (95 aa).

Belongs to the LAMTOR4 family. As to quaternary structure, part of the Ragulator complex.

It localises to the lysosome. Functionally, regulator of the TOR pathway, a signaling cascade that promotes cell growth in response to growth factors, energy levels, and amino acids. As part of the Ragulator complex, may activate the TOR signaling cascade in response to amino acids. In Nematostella vectensis (Starlet sea anemone), this protein is Ragulator complex protein LAMTOR4 homolog.